We begin with the raw amino-acid sequence, 114 residues long: Beta-microseminoprotein E1 (114 aa).

The first 20 residues, 1-20 (MNVLLGGLVIFATFVTLCNG), serve as a signal peptide directing secretion. 5 disulfides stabilise this stretch: C22–C70, C38–C62, C57–C93, C60–C69, and C84–C107.

This sequence belongs to the beta-microseminoprotein family.

Its subcellular location is the secreted. This chain is Beta-microseminoprotein E1 (MSPE), found in Saguinus oedipus (Cotton-top tamarin).